We begin with the raw amino-acid sequence, 221 residues long: Probable septum site-determining protein MinC (221 aa).

This sequence belongs to the MinC family. In terms of assembly, interacts with MinD and FtsZ.

Its function is as follows. Cell division inhibitor that blocks the formation of polar Z ring septums. Rapidly oscillates between the poles of the cell to destabilize FtsZ filaments that have formed before they mature into polar Z rings. Prevents FtsZ polymerization. The protein is Probable septum site-determining protein MinC of Shewanella sp. (strain ANA-3).